The primary structure comprises 706 residues: Termination factor NPH-I homolog (706 aa).

Residues 62–227 (IGQGENTRGL…VPCFNMLSGR (166 aa)) form the Helicase ATP-binding domain. ATP is bound at residue 75–82 (HQMGMGKT). The DEAH box signature appears at 168 to 171 (DEAH). A Helicase C-terminal domain is found at 417–599 (QCLQPLKVLE…HLNSAFRDLL (183 aa)).

It belongs to the DEAD box helicase family. DEAH subfamily. Part of the viral DNA-directed RNA polymerase that consists of 8 polII-like subunits (RPB1, RPB2, RPB3, RPB5, RPB6, RPB7, RPB9, RPB10), a capping enzyme and a termination factor.

It is found in the virion. In terms of biological role, putative DNA-dependent ATPase required for providing the needed energy to achieve the termination of early transcripts. The polypeptide is Termination factor NPH-I homolog (African swine fever virus (isolate Warthog/Namibia/Wart80/1980) (ASFV)).